A 90-amino-acid chain; its full sequence is Phosphocarrier protein NPr (90 aa).

Positions 2–90 (TVKQTVEISN…ALFNAGFDED (89 aa)) constitute an HPr domain. Histidine 16 acts as the Pros-phosphohistidine intermediate in catalysis.

This sequence belongs to the HPr family.

It is found in the cytoplasm. Component of the phosphoenolpyruvate-dependent nitrogen-metabolic phosphotransferase system (nitrogen-metabolic PTS), that seems to be involved in regulating nitrogen metabolism. The phosphoryl group from phosphoenolpyruvate (PEP) is transferred to the phosphoryl carrier protein NPr by enzyme I-Ntr. Phospho-NPr then transfers it to EIIA-Ntr. Could function in the transcriptional regulation of sigma-54 dependent operons in conjunction with the NPr (PtsO) and EIIA-Ntr (PtsN) proteins. This chain is Phosphocarrier protein NPr (ptsO), found in Klebsiella oxytoca.